The primary structure comprises 137 residues: Large-conductance mechanosensitive channel (137 aa).

2 helical membrane-spanning segments follow: residues 10–30 (FAMR…AAFG) and 76–96 (GVFI…FVAI).

Belongs to the MscL family. In terms of assembly, homopentamer.

The protein resides in the cell inner membrane. In terms of biological role, channel that opens in response to stretch forces in the membrane lipid bilayer. May participate in the regulation of osmotic pressure changes within the cell. This Salmonella typhimurium (strain LT2 / SGSC1412 / ATCC 700720) protein is Large-conductance mechanosensitive channel.